The primary structure comprises 358 residues: Peptide chain release factor 1 (358 aa).

An N5-methylglutamine modification is found at Gln233.

The protein belongs to the prokaryotic/mitochondrial release factor family. Methylated by PrmC. Methylation increases the termination efficiency of RF1.

The protein localises to the cytoplasm. Peptide chain release factor 1 directs the termination of translation in response to the peptide chain termination codons UAG and UAA. In Macrococcus caseolyticus (strain JCSC5402) (Macrococcoides caseolyticum), this protein is Peptide chain release factor 1.